Consider the following 295-residue polypeptide: sn-glycerol-3-phosphate transport system permease protein UgpA (295 aa).

The Cytoplasmic portion of the chain corresponds to 1–11; it reads MSSSRPVFRSR. The chain crosses the membrane as a helical span at residues 12–32; it reads WLPYLLVAPQLIITVIFFIWP. Residues 33–80 are Periplasmic-facing; that stretch reads AGEALWYSLQSVDPFGFSSRFVGLDNFVALFHDSYYIDSFWTTIKFST. One can recognise an ABC transmembrane type-1 domain in the interval 76-284; that stretch reads IKFSTFVTVS…FLVIVLTVMQ (209 aa). The chain crosses the membrane as a helical span at residues 81 to 101; sequence FVTVSGLLVSLFFAALVEYIV. At 102-109 the chain is on the cytoplasmic side; it reads RGSRFYQT. The chain crosses the membrane as a helical span at residues 110-130; that stretch reads LMLLPYAVAPAVAAVLWIFLF. Over 131–156 the chain is Periplasmic; the sequence is NPGRGLITHFLAEFGYDWNHAQNSGQ. A helical transmembrane segment spans residues 157–177; the sequence is AMFLVVFASVWKQISYNFLFF. The Cytoplasmic portion of the chain corresponds to 178–207; that stretch reads YAALQSIPRSLIEAAAIDGAGPIRRFFKIA. A helical transmembrane segment spans residues 208 to 228; it reads LPLIAPVSFFLLVVNLVYAFF. The Periplasmic portion of the chain corresponds to 229-262; it reads DTFPVIDAATSGGPVQATTTLIYKIYREGFTGLD. The helical transmembrane segment at 263–283 threads the bilayer; sequence LASSAAQSVVLMFLVIVLTVM. Residues 284 to 295 lie on the Cytoplasmic side of the membrane; it reads QFRYVESKVRYQ.

Belongs to the binding-protein-dependent transport system permease family. UgpAE subfamily. The complex is composed of two ATP-binding proteins (UgpC), two transmembrane proteins (UgpA and UgpE) and a solute-binding protein (UgpB).

It localises to the cell inner membrane. Part of the ABC transporter complex UgpBAEC involved in sn-glycerol-3-phosphate (G3P) import. Probably responsible for the translocation of the substrate across the membrane. The sequence is that of sn-glycerol-3-phosphate transport system permease protein UgpA (ugpA) from Escherichia coli O157:H7.